We begin with the raw amino-acid sequence, 578 residues long: Proline--tRNA ligase (578 aa).

This sequence belongs to the class-II aminoacyl-tRNA synthetase family. ProS type 1 subfamily. In terms of assembly, homodimer.

The protein localises to the cytoplasm. The catalysed reaction is tRNA(Pro) + L-proline + ATP = L-prolyl-tRNA(Pro) + AMP + diphosphate. Its function is as follows. Catalyzes the attachment of proline to tRNA(Pro) in a two-step reaction: proline is first activated by ATP to form Pro-AMP and then transferred to the acceptor end of tRNA(Pro). As ProRS can inadvertently accommodate and process non-cognate amino acids such as alanine and cysteine, to avoid such errors it has two additional distinct editing activities against alanine. One activity is designated as 'pretransfer' editing and involves the tRNA(Pro)-independent hydrolysis of activated Ala-AMP. The other activity is designated 'posttransfer' editing and involves deacylation of mischarged Ala-tRNA(Pro). The misacylated Cys-tRNA(Pro) is not edited by ProRS. In Burkholderia ambifaria (strain MC40-6), this protein is Proline--tRNA ligase.